We begin with the raw amino-acid sequence, 648 residues long: MTNFEPKKLKNVWTIEDSISTYNIDKWGDKYFSINSKGNISVTKDIKSENKIDLFKLVKELKSREINPPLIIRFNDILKDRINALHDSFFKAIKTYKYKNIYQGVFPVKCNQQKNVLEKIIDFGSQWNFGLEVGSKSELLIGLALLENHNSLLICNGYKDKKYIEIATLARKLGKNPIIVIEQRDEVKRIIQAVQELNATPLIGIRAKLSSKSSGRWGKSIGDNSKFGLSIPEIMLTIKELKEANLINEMKLLHFHIGSQISDIAVIKDALQEASQIYVELCKLGAPMQYIDVGGGLGIDFDGTKTSSNTSTNYSLQNYANDVIATIKDSCELNNIKHPTIISESGRAIISHCSVLIFNVLGTSHVSSKLQIFDKKNQQLIISNLLETYYELKKLKNKKINLSQIIELWNDAKKFKEDCLVAFRLGFLSLAERAYAEELAWACAKEISNNLNNDEINHPDLSEITETLASTYYANLSIFKSIPDSWAINQIFPIVPIHRHLEEPFCKGNFADLTCDSDGKLNNFIDDGKIKSLLNLHEPEKDKDYLIGIFMTGAYQEALGNLHNLFGSTNVVHIDINQDDSYKVKNIIKEDSKSEILQLLDYSSASLVESIRINTESAIDQKKLTIEEARKLMDQIEISLRKSSYLSE.

Lysine 109 is subject to N6-(pyridoxal phosphate)lysine. 291 to 301 (IDVGGGLGIDF) lines the substrate pocket.

It belongs to the Orn/Lys/Arg decarboxylase class-II family. SpeA subfamily. The cofactor is Mg(2+). Pyridoxal 5'-phosphate is required as a cofactor.

The catalysed reaction is L-arginine + H(+) = agmatine + CO2. The protein operates within amine and polyamine biosynthesis; agmatine biosynthesis; agmatine from L-arginine: step 1/1. Catalyzes the biosynthesis of agmatine from arginine. In Prochlorococcus marinus (strain MIT 9301), this protein is Biosynthetic arginine decarboxylase.